A 397-amino-acid polypeptide reads, in one-letter code: Elongation factor Tu (397 aa).

Residues 10–206 form the tr-type G domain; sequence KPHVNVGTIG…TMDTYFPQPE (197 aa). A G1 region spans residues 19–26; sequence GHVDHGKT. 19–26 is a GTP binding site; sequence GHVDHGKT. T26 provides a ligand contact to Mg(2+). The segment at 60-64 is G2; it reads GITIA. Residues 81-84 are G3; sequence DCPG. Residues 81 to 85 and 136 to 139 each bind GTP; these read DCPGH and NKAD. A G4 region spans residues 136-139; sequence NKAD. Positions 174 to 176 are G5; sequence SAL.

The protein belongs to the TRAFAC class translation factor GTPase superfamily. Classic translation factor GTPase family. EF-Tu/EF-1A subfamily. As to quaternary structure, monomer.

Its subcellular location is the cytoplasm. The enzyme catalyses GTP + H2O = GDP + phosphate + H(+). Functionally, GTP hydrolase that promotes the GTP-dependent binding of aminoacyl-tRNA to the A-site of ribosomes during protein biosynthesis. This is Elongation factor Tu from Coxiella burnetii (strain Dugway 5J108-111).